We begin with the raw amino-acid sequence, 96 residues long: Co-chaperonin GroES (96 aa).

Belongs to the GroES chaperonin family. As to quaternary structure, heptamer of 7 subunits arranged in a ring. Interacts with the chaperonin GroEL.

It localises to the cytoplasm. Its function is as follows. Together with the chaperonin GroEL, plays an essential role in assisting protein folding. The GroEL-GroES system forms a nano-cage that allows encapsulation of the non-native substrate proteins and provides a physical environment optimized to promote and accelerate protein folding. GroES binds to the apical surface of the GroEL ring, thereby capping the opening of the GroEL channel. In Verminephrobacter eiseniae (strain EF01-2), this protein is Co-chaperonin GroES.